The following is a 382-amino-acid chain: Apolipoprotein A-IV (382 aa).

The N-terminal stretch at 1-20 (MFLKAVVLSLALVAVTGARA) is a signal peptide. A run of 13 repeats spans residues 33-54 (DYFSQLGSNAKKAVEHLQKSEL), 60-81 (TLFQDKLGEVNTYTEDLQKKLV), 82-103 (PFATELHERLTKDSEKLKEEIR), 115-136 (PHATEVSQKIGDNVRELQQRLG), 137-158 (PFTGGLRTQVNTQVQQLQRQLK), 159-180 (PYAERMESVLRQNIRNLEASVA), 181-202 (PYADEFKAKIDQNVEELKGSLT), 203-224 (PYAEELKAKIDQNVEELRRSLA), 225-246 (PYAQDVQEKLNHQLEGLAFQMK), 247-268 (KQAEELKAKISANADELRQKLV), 269-286 (PVAENVHGHLKGNTEGLQ), 287-308 (KSLLELRSHLDQQVEEFRLKVE), and 309-330 (PYGETFNKALVQQVEDLRQKLG). Residues 33–330 (DYFSQLGSNA…QVEDLRQKLG (298 aa)) are 13 X 22 AA approximate tandem repeats. The interval 361–382 (EASQGQSQALPAQEKAQAPLEG) is disordered.

Belongs to the apolipoprotein A1/A4/E family. Homodimer. Secreted in plasma.

The protein localises to the secreted. Its function is as follows. May have a role in chylomicrons and VLDL secretion and catabolism. Required for efficient activation of lipoprotein lipase by ApoC-II; potent activator of LCAT. Apoa-IV is a major component of HDL and chylomicrons. In Sus scrofa (Pig), this protein is Apolipoprotein A-IV (APOA4).